A 273-amino-acid polypeptide reads, in one-letter code: 4-hydroxy-tetrahydrodipicolinate reductase (273 aa).

NAD(+)-binding positions include 12-17 and Glu38; that span reads GAGGRM. Arg39 serves as a coordination point for NADP(+). Residues 102 to 104 and 126 to 129 contribute to the NAD(+) site; these read GTT and AANF. The active-site Proton donor/acceptor is His159. His160 is a (S)-2,3,4,5-tetrahydrodipicolinate binding site. Catalysis depends on Lys163, which acts as the Proton donor. Residue 169-170 coordinates (S)-2,3,4,5-tetrahydrodipicolinate; that stretch reads GT.

Belongs to the DapB family. In terms of assembly, homotetramer.

Its subcellular location is the cytoplasm. The enzyme catalyses (S)-2,3,4,5-tetrahydrodipicolinate + NAD(+) + H2O = (2S,4S)-4-hydroxy-2,3,4,5-tetrahydrodipicolinate + NADH + H(+). The catalysed reaction is (S)-2,3,4,5-tetrahydrodipicolinate + NADP(+) + H2O = (2S,4S)-4-hydroxy-2,3,4,5-tetrahydrodipicolinate + NADPH + H(+). It functions in the pathway amino-acid biosynthesis; L-lysine biosynthesis via DAP pathway; (S)-tetrahydrodipicolinate from L-aspartate: step 4/4. Catalyzes the conversion of 4-hydroxy-tetrahydrodipicolinate (HTPA) to tetrahydrodipicolinate. The polypeptide is 4-hydroxy-tetrahydrodipicolinate reductase (Salmonella enteritidis PT4 (strain P125109)).